The following is a 374-amino-acid chain: 5-aminosalicylate 1,2-dioxygenase (374 aa).

The protein belongs to the gentisate 1,2-dioxygenase family. Fe(2+) serves as cofactor.

The catalysed reaction is 5-amino-2-hydroxybenzoate + O2 = (2Z,4E)-4-amino-6-oxohepta-2,4-dienedioate + H(+). Its activity is regulated as follows. Inhibited by SDS and o-phenanthroline, a ferrous iron chelator. Partially inhibited by EDTA. Involved in the biodegradation of 3-aminobenzoate. Catalyzes the cleavage of the 5-aminosalicylate (5ASA) aromatic ring to form 4-amino-6-oxohepta-2,4-dienedioate (cis-ACOHDA). Can also convert gentisate, but the catalytic efficiency with 5ASA is 70-fold higher. In Comamonas sp, this protein is 5-aminosalicylate 1,2-dioxygenase.